A 691-amino-acid polypeptide reads, in one-letter code: DNA topoisomerase 1 (691 aa).

In terms of domain architecture, Toprim spans 3–114; that stretch reads DYLVIVESPA…DCRVVFNEIT (112 aa). Residues Glu9 and Asp82 each contribute to the Mg(2+) site. Residues 129–558 form the Topo IA-type catalytic domain; sequence NMDLVDAQQA…NFYTDFEKRV (430 aa). The tract at residues 163–168 is interaction with DNA; that stretch reads SAGRVQ. The active-site O-(5'-phospho-DNA)-tyrosine intermediate is Tyr298. 3 C4-type zinc fingers span residues 579 to 605, 619 to 647, and 660 to 683; these read CELC…FPDC, CPSC…YPDC, and CPKC…CVEC.

Belongs to the type IA topoisomerase family. In terms of assembly, monomer. Interacts with the RNA polymerase core. The cofactor is Mg(2+).

The catalysed reaction is ATP-independent breakage of single-stranded DNA, followed by passage and rejoining.. Its function is as follows. Releases the supercoiling and torsional tension of DNA, which is introduced during the DNA replication and transcription, by transiently cleaving and rejoining one strand of the DNA duplex. Introduces a single-strand break via transesterification at a target site in duplex DNA. The scissile phosphodiester is attacked by the catalytic tyrosine of the enzyme, resulting in the formation of a DNA-(5'-phosphotyrosyl)-enzyme intermediate and the expulsion of a 3'-OH DNA strand. The free DNA strand then undergoes passage around the unbroken strand, thus removing DNA supercoils. Finally, in the religation step, the DNA 3'-OH attacks the covalent intermediate to expel the active-site tyrosine and restore the DNA phosphodiester backbone. This is DNA topoisomerase 1 from Bacillus subtilis (strain 168).